The following is a 363-amino-acid chain: Somatostatin receptor type 5 (363 aa).

The Extracellular segment spans residues 1–35 (MEPLSLASTPSWNASAASSGNHNWSLVGSASPMGA). N13 and N23 each carry an N-linked (GlcNAc...) asparagine glycan. The chain crosses the membrane as a helical span at residues 36–63 (RAVLVPVLYLLVCTVGLSGNTLVIYVVL). Over 64–73 (RHAKMKTVTN) the chain is Cytoplasmic. The chain crosses the membrane as a helical span at residues 74–99 (VYILNLAVADVLFMLGLPFLATQNAV). The Extracellular segment spans residues 100–111 (VSYWPFGSFLCR). Residues C110 and C185 are joined by a disulfide bond. Residues 112-133 (LVMTLDGINQFTSIFCLMVMSV) traverse the membrane as a helical segment. Residues 134 to 155 (DRYLAVVHPLRSARWRRPRVAK) are Cytoplasmic-facing. The helical transmembrane segment at 156 to 176 (MASAAVWVFSLLMSLPLLVFA) threads the bilayer. The Extracellular segment spans residues 177 to 196 (DVQEGWGTCNLSWPEPVGLW). N186 carries an N-linked (GlcNAc...) asparagine glycan. The helical transmembrane segment at 197 to 221 (GAAFITYTSVLGFFGPLLVICLCYL) threads the bilayer. The Cytoplasmic portion of the chain corresponds to 222-247 (LIVVKVKAAGMRVGSSRRRRSEPKVT). Residues 248–273 (RMVVVVVLVFVGCWLPFFIVNIVNLA) form a helical membrane-spanning segment. Residues 274–283 (FTLPEEPTSA) lie on the Extracellular side of the membrane. A helical transmembrane segment spans residues 284–308 (GLYFFVVVLSYANSCANPLLYGFLS). Residues 309-363 (DNFRQSFRKVLCLRRGYGMEDADAIEPRPDKSGRPQATLPTRSCEANGLMQTSRI) are Cytoplasmic-facing. C320 carries the S-palmitoyl cysteine; by ZDHHC5 lipid modification. A disordered region spans residues 331 to 363 (DAIEPRPDKSGRPQATLPTRSCEANGLMQTSRI).

This sequence belongs to the G-protein coupled receptor 1 family. As to quaternary structure, heterodimer with SSTR2. Heterodimerization with SSTR2 increases cell growth inhibition activity of SSTR2. Palmitoylated at Cys-320 by ZDHHC5, but not ZDHHC8. Palmitoylation creates an additional intracellular loop which is thought to be important for efficient coupling to G-proteins and may target the protein to lipid rafts. In terms of tissue distribution, prominent in the pituitary and small intestine. Low levels in islets and spleen. Not detected in kidney, pancreas, cerebellum, or cortex.

The protein localises to the cell membrane. In terms of biological role, receptor for somatostatin-28. The activity of this receptor is mediated by G proteins which inhibit adenylyl cyclase. Increases cell growth inhibition activity of SSTR2 following heterodimerization. This chain is Somatostatin receptor type 5 (Sstr5), found in Rattus norvegicus (Rat).